Reading from the N-terminus, the 383-residue chain is uncharacterized protein (383 aa).

The protein belongs to the peptidase M20 family.

This is an uncharacterized protein from Staphylococcus haemolyticus (strain JCSC1435).